The primary structure comprises 213 residues: 3-isopropylmalate dehydratase small subunit (213 aa).

Belongs to the LeuD family. LeuD type 1 subfamily. In terms of assembly, heterodimer of LeuC and LeuD.

It catalyses the reaction (2R,3S)-3-isopropylmalate = (2S)-2-isopropylmalate. The protein operates within amino-acid biosynthesis; L-leucine biosynthesis; L-leucine from 3-methyl-2-oxobutanoate: step 2/4. In terms of biological role, catalyzes the isomerization between 2-isopropylmalate and 3-isopropylmalate, via the formation of 2-isopropylmaleate. The polypeptide is 3-isopropylmalate dehydratase small subunit (Neisseria meningitidis serogroup C / serotype 2a (strain ATCC 700532 / DSM 15464 / FAM18)).